The sequence spans 244 residues: 2-C-methyl-D-erythritol 4-phosphate cytidylyltransferase (244 aa).

The protein belongs to the IspD/TarI cytidylyltransferase family. IspD subfamily.

It catalyses the reaction 2-C-methyl-D-erythritol 4-phosphate + CTP + H(+) = 4-CDP-2-C-methyl-D-erythritol + diphosphate. The protein operates within isoprenoid biosynthesis; isopentenyl diphosphate biosynthesis via DXP pathway; isopentenyl diphosphate from 1-deoxy-D-xylulose 5-phosphate: step 2/6. Catalyzes the formation of 4-diphosphocytidyl-2-C-methyl-D-erythritol from CTP and 2-C-methyl-D-erythritol 4-phosphate (MEP). This chain is 2-C-methyl-D-erythritol 4-phosphate cytidylyltransferase, found in Corynebacterium diphtheriae (strain ATCC 700971 / NCTC 13129 / Biotype gravis).